The sequence spans 150 residues: Helix-loop-helix protein hlh-12 (150 aa).

The interval 1–24 (MAKKPRVTKLNTDRRSRANERERQ) is disordered. A compositionally biased stretch (basic and acidic residues) spans 11–24 (NTDRRSRANERERQ). The segment at 13–26 (DRRSRANERERQRV) is basic motif. The bHLH domain maps to 13–65 (DRRSRANERERQRVSEMNGMFDVLLNLLPPSHFKTRLSRVQILREATSYIIRL). The segment at 27 to 65 (SEMNGMFDVLLNLLPPSHFKTRLSRVQILREATSYIIRL) is helix-loop-helix motif.

Forms a heterodimer with helix-loop-helix protein hlh-2.

It localises to the nucleus. In terms of biological role, transcription factor which binds the E box motif 5'-GCAGGTG-3'. Involved in migration of the gonadal leader cells; distal tip cells (DTCs) in hermaphrodites, and linker cells in males. Positively regulates expression of alpha integrin ina-1 and ADAMTS protease gon-1. The chain is Helix-loop-helix protein hlh-12 from Caenorhabditis elegans.